Reading from the N-terminus, the 525-residue chain is GMP synthase [glutamine-hydrolyzing] (525 aa).

One can recognise a Glutamine amidotransferase type-1 domain in the interval 9 to 207 (RILILDFGSQ…VRDICQCEAL (199 aa)). The active-site Nucleophile is the Cys86. Active-site residues include His181 and Glu183. The GMPS ATP-PPase domain maps to 208-400 (WTPAKIIDDA…LGLPYDMLYR (193 aa)). 235 to 241 (SGGVDSS) lines the ATP pocket.

In terms of assembly, homodimer.

It catalyses the reaction XMP + L-glutamine + ATP + H2O = GMP + L-glutamate + AMP + diphosphate + 2 H(+). It participates in purine metabolism; GMP biosynthesis; GMP from XMP (L-Gln route): step 1/1. Functionally, catalyzes the synthesis of GMP from XMP. The polypeptide is GMP synthase [glutamine-hydrolyzing] (Citrobacter koseri (strain ATCC BAA-895 / CDC 4225-83 / SGSC4696)).